The chain runs to 168 residues: Ribosome maturation factor RimM (168 aa).

A PRC barrel domain is found at 96 to 168 (KDEYYWGDLV…RIRVAWQKDW (73 aa)).

It belongs to the RimM family. In terms of assembly, binds ribosomal protein uS19.

Its subcellular location is the cytoplasm. In terms of biological role, an accessory protein needed during the final step in the assembly of 30S ribosomal subunit, possibly for assembly of the head region. Essential for efficient processing of 16S rRNA. May be needed both before and after RbfA during the maturation of 16S rRNA. It has affinity for free ribosomal 30S subunits but not for 70S ribosomes. In Azoarcus sp. (strain BH72), this protein is Ribosome maturation factor RimM.